We begin with the raw amino-acid sequence, 230 residues long: Proteasome subunit alpha (230 aa).

Belongs to the peptidase T1A family. As to quaternary structure, the 20S proteasome core is composed of 14 alpha and 14 beta subunits that assemble into four stacked heptameric rings, resulting in a barrel-shaped structure. The two inner rings, each composed of seven catalytic beta subunits, are sandwiched by two outer rings, each composed of seven alpha subunits. The catalytic chamber with the active sites is on the inside of the barrel. Has a gated structure, the ends of the cylinder being occluded by the N-termini of the alpha-subunits. Is capped by the proteasome-associated ATPase, ARC.

It localises to the cytoplasm. It functions in the pathway protein degradation; proteasomal Pup-dependent pathway. With respect to regulation, the formation of the proteasomal ATPase ARC-20S proteasome complex, likely via the docking of the C-termini of ARC into the intersubunit pockets in the alpha-rings, may trigger opening of the gate for substrate entry. Interconversion between the open-gate and close-gate conformations leads to a dynamic regulation of the 20S proteasome proteolysis activity. Component of the proteasome core, a large protease complex with broad specificity involved in protein degradation. The protein is Proteasome subunit alpha of Thermomonospora curvata (strain ATCC 19995 / DSM 43183 / JCM 3096 / KCTC 9072 / NBRC 15933 / NCIMB 10081 / Henssen B9).